Consider the following 185-residue polypeptide: Ribosome-recycling factor (185 aa).

It belongs to the RRF family.

The protein localises to the cytoplasm. Functionally, responsible for the release of ribosomes from messenger RNA at the termination of protein biosynthesis. May increase the efficiency of translation by recycling ribosomes from one round of translation to another. The chain is Ribosome-recycling factor from Streptococcus equi subsp. equi (strain 4047).